A 129-amino-acid chain; its full sequence is Flagellar assembly factor FliW 2 (129 aa).

This sequence belongs to the FliW family. In terms of assembly, interacts with translational regulator CsrA and flagellin(s).

The protein resides in the cytoplasm. Acts as an anti-CsrA protein, binds CsrA and prevents it from repressing translation of its target genes, one of which is flagellin. Binds to flagellin and participates in the assembly of the flagellum. This Helicobacter pylori (strain HPAG1) protein is Flagellar assembly factor FliW 2.